An 893-amino-acid chain; its full sequence is Probable disease resistance protein At1g62630 (893 aa).

Residues Gly-24 to Glu-68 are a coiled coil. The region spanning Thr-136–Gly-440 is the NB-ARC domain. Gly-179–Thr-186 serves as a coordination point for ATP. LRR repeat units lie at residues Val-516–Met-537, Glu-538–Lys-559, Lys-571–Leu-593, Ser-595–Lys-617, Lys-618–His-640, and Asn-641–Glu-663.

The protein belongs to the disease resistance NB-LRR family.

Functionally, probable disease resistance protein. This is Probable disease resistance protein At1g62630 from Arabidopsis thaliana (Mouse-ear cress).